The primary structure comprises 656 residues: Choline transporter-like protein 3 (656 aa).

A helical membrane pass occupies residues 37-57 (WLVLFFLFWTGLVFIMGYSVV). Residues asparagine 141 and asparagine 154 are each glycosylated (N-linked (GlcNAc...) asparagine). Helical transmembrane passes span 216-236 (DTIL…LFAF), 242-262 (LLIH…CGVL), 288-308 (LAFA…IFTL), 337-357 (LWTC…LLSL), and 381-401 (YMWW…LACQ). Residues asparagine 506 and asparagine 524 are each glycosylated (N-linked (GlcNAc...) asparagine). Residues 537–557 (FVIFLGKVLVVCFSIFGGLMA) form a helical membrane-spanning segment. Asparagine 559 carries N-linked (GlcNAc...) asparagine glycosylation. A helical transmembrane segment spans residues 566–586 (VWAIPLLLVAFFACVVAHSFL). Residues 634-656 (AKSQGQKDALPNEEGTELQPIVR) form a disordered region.

This sequence belongs to the CTL (choline transporter-like) family.

Its subcellular location is the membrane. The protein is Choline transporter-like protein 3 (Slc44a3) of Mus musculus (Mouse).